Consider the following 1342-residue polypeptide: DNA-directed RNA polymerase subunit beta (1342 aa).

It belongs to the RNA polymerase beta chain family. In terms of assembly, the RNAP catalytic core consists of 2 alpha, 1 beta, 1 beta' and 1 omega subunit. When a sigma factor is associated with the core the holoenzyme is formed, which can initiate transcription.

The enzyme catalyses RNA(n) + a ribonucleoside 5'-triphosphate = RNA(n+1) + diphosphate. DNA-dependent RNA polymerase catalyzes the transcription of DNA into RNA using the four ribonucleoside triphosphates as substrates. The polypeptide is DNA-directed RNA polymerase subunit beta (Shewanella amazonensis (strain ATCC BAA-1098 / SB2B)).